Consider the following 61-residue polypeptide: Photosystem II reaction center protein K (61 aa).

Positions 1 to 24 (MLNTFSLIGICLNSTLYSSSFFFG) are excised as a propeptide. The helical transmembrane segment at 36 to 56 (IVDIMPVIPLFFFLLAFVWQA) threads the bilayer.

This sequence belongs to the PsbK family. PSII is composed of 1 copy each of membrane proteins PsbA, PsbB, PsbC, PsbD, PsbE, PsbF, PsbH, PsbI, PsbJ, PsbK, PsbL, PsbM, PsbT, PsbX, PsbY, PsbZ, Psb30/Ycf12, at least 3 peripheral proteins of the oxygen-evolving complex and a large number of cofactors. It forms dimeric complexes.

It localises to the plastid. It is found in the chloroplast thylakoid membrane. In terms of biological role, one of the components of the core complex of photosystem II (PSII). PSII is a light-driven water:plastoquinone oxidoreductase that uses light energy to abstract electrons from H(2)O, generating O(2) and a proton gradient subsequently used for ATP formation. It consists of a core antenna complex that captures photons, and an electron transfer chain that converts photonic excitation into a charge separation. The protein is Photosystem II reaction center protein K of Solanum bulbocastanum (Wild potato).